A 446-amino-acid chain; its full sequence is NADP-specific glutamate dehydrogenase (446 aa).

Substrate contacts are provided by Lys92, Gln113, and Lys116. The Proton donor role is filled by Lys128. Residue Gly167 participates in substrate binding. NADP(+) contacts are provided by Thr211 and Asn242. Residue Ser379 participates in substrate binding.

The protein belongs to the Glu/Leu/Phe/Val dehydrogenases family. In terms of assembly, homohexamer.

The catalysed reaction is L-glutamate + NADP(+) + H2O = 2-oxoglutarate + NH4(+) + NADPH + H(+). In terms of biological role, catalyzes the reversible oxidative deamination of glutamate to a-ketoglutarate and ammonia. The sequence is that of NADP-specific glutamate dehydrogenase (gdhA) from Unknown prokaryotic organism.